Reading from the N-terminus, the 789-residue chain is Isoamylase SU1, chloroplastic (789 aa).

The transit peptide at 1–44 (MAQQLPCVSSPRPLLAVPAGRWRAGVRGRPNVAGLGRGRLSLHA) directs the protein to the chloroplast. The active-site Nucleophile is the D417. E473 functions as the Proton donor in the catalytic mechanism.

The protein belongs to the glycosyl hydrolase 13 family.

The protein localises to the plastid. It is found in the chloroplast. It catalyses the reaction Hydrolysis of (1-&gt;6)-alpha-D-glucosidic branch linkages in glycogen, amylopectin and their beta-limit dextrins.. It functions in the pathway glycan biosynthesis; starch biosynthesis. Functionally, isoamylase starch-debranching enzyme involved in amylopectin biosynthesis in endosperm. Functions by removing excess branches or improper branches that interfere with the formation of double helices of the cluster chains of amylopectin and crystallization of starch. The chain is Isoamylase SU1, chloroplastic from Zea mays (Maize).